The sequence spans 172 residues: Protein CapG (172 aa).

This sequence belongs to the transferase hexapeptide repeat family.

The protein operates within capsule biogenesis; capsule polysaccharide biosynthesis. Required for the biosynthesis of type 1 capsular polysaccharide. In Staphylococcus aureus, this protein is Protein CapG (capG).